We begin with the raw amino-acid sequence, 833 residues long: Leucine--tRNA ligase (833 aa).

Residues 41–52 (PYPSGAGLHVGH) carry the 'HIGH' region motif. Positions 610–614 (KMSKS) match the 'KMSKS' region motif. An ATP-binding site is contributed by K613.

It belongs to the class-I aminoacyl-tRNA synthetase family.

Its subcellular location is the cytoplasm. The enzyme catalyses tRNA(Leu) + L-leucine + ATP = L-leucyl-tRNA(Leu) + AMP + diphosphate. The chain is Leucine--tRNA ligase from Streptococcus pyogenes serotype M12 (strain MGAS2096).